The primary structure comprises 154 residues: MASRDTPPATSYAPPDVPSGVAALFLTIPFAFFLPELVFGFWVWTLVAATHVAYPLLQGWVLYVSLTSFLISLMFLMSYLFGFYKRFESWRVLDSLYHGTTGILYMSASVLQAYATIISEGHNLSHYYINVAASFFAFLTTLLYILHAFSIYYH.

Helical transmembrane passes span 24-44 (LFLT…FWVW), 61-81 (VLYV…SYLF), 99-119 (GTTG…TIIS), and 131-151 (VAAS…AFSI). Residues 24–154 (LFLTIPFAFF…ILHAFSIYYH (131 aa)) form the MARVEL domain.

It belongs to the MAL family.

It localises to the membrane. This is MAL-like protein (Mall) from Mus musculus (Mouse).